The chain runs to 460 residues: A-type ATP synthase subunit B (460 aa).

It belongs to the ATPase alpha/beta chains family. As to quaternary structure, has multiple subunits, A(3), B(3), C, D, E, F, G, I and K(x); there may be a few other subunits as well.

The protein resides in the cell membrane. Component of the A-type ATP synthase that produces ATP from ADP in the presence of a proton gradient across the membrane. The B chain is a regulatory subunit. The polypeptide is A-type ATP synthase subunit B (Methanosarcina mazei (strain ATCC BAA-159 / DSM 3647 / Goe1 / Go1 / JCM 11833 / OCM 88) (Methanosarcina frisia)).